We begin with the raw amino-acid sequence, 278 residues long: Polyamine aminopropyltransferase (278 aa).

The PABS domain maps to 5-238; the sequence is ELWFTEQQTP…GLWSFTLGSK (234 aa). Q34 lines the S-methyl-5'-thioadenosine pocket. The spermidine site is built by H65 and D89. S-methyl-5'-thioadenosine-binding positions include E109 and 140–141; that span reads DG. The active-site Proton acceptor is D158. 158 to 161 contributes to the spermidine binding site; that stretch reads DSTD. P165 contacts S-methyl-5'-thioadenosine.

Belongs to the spermidine/spermine synthase family. In terms of assembly, homodimer or homotetramer.

Its subcellular location is the cytoplasm. It carries out the reaction S-adenosyl 3-(methylsulfanyl)propylamine + putrescine = S-methyl-5'-thioadenosine + spermidine + H(+). It participates in amine and polyamine biosynthesis; spermidine biosynthesis; spermidine from putrescine: step 1/1. Its function is as follows. Catalyzes the irreversible transfer of a propylamine group from the amino donor S-adenosylmethioninamine (decarboxy-AdoMet) to putrescine (1,4-diaminobutane) to yield spermidine. The chain is Polyamine aminopropyltransferase from Caldicellulosiruptor bescii (strain ATCC BAA-1888 / DSM 6725 / KCTC 15123 / Z-1320) (Anaerocellum thermophilum).